A 117-amino-acid polypeptide reads, in one-letter code: Large ribosomal subunit protein bL20 (117 aa).

Belongs to the bacterial ribosomal protein bL20 family.

Binds directly to 23S ribosomal RNA and is necessary for the in vitro assembly process of the 50S ribosomal subunit. It is not involved in the protein synthesizing functions of that subunit. This is Large ribosomal subunit protein bL20 from Idiomarina loihiensis (strain ATCC BAA-735 / DSM 15497 / L2-TR).